Consider the following 179-residue polypeptide: Methylated-DNA--protein-cysteine methyltransferase (179 aa).

C130 functions as the Nucleophile; methyl group acceptor in the catalytic mechanism.

This sequence belongs to the MGMT family.

It localises to the cytoplasm. It catalyses the reaction a 6-O-methyl-2'-deoxyguanosine in DNA + L-cysteinyl-[protein] = S-methyl-L-cysteinyl-[protein] + a 2'-deoxyguanosine in DNA. The enzyme catalyses a 4-O-methyl-thymidine in DNA + L-cysteinyl-[protein] = a thymidine in DNA + S-methyl-L-cysteinyl-[protein]. Functionally, involved in the cellular defense against the biological effects of O6-methylguanine (O6-MeG) and O4-methylthymine (O4-MeT) in DNA. Repairs the methylated nucleobase in DNA by stoichiometrically transferring the methyl group to a cysteine residue in the enzyme. This is a suicide reaction: the enzyme is irreversibly inactivated. The polypeptide is Methylated-DNA--protein-cysteine methyltransferase (Haemophilus influenzae (strain ATCC 51907 / DSM 11121 / KW20 / Rd)).